Here is a 495-residue protein sequence, read N- to C-terminus: Glutamate--tRNA ligase (495 aa).

The 'HIGH' region motif lies at 12 to 22 (PSPTGHLHIGN). Positions 259–263 (KLSKR) match the 'KMSKS' region motif. ATP is bound at residue K262.

This sequence belongs to the class-I aminoacyl-tRNA synthetase family. Glutamate--tRNA ligase type 1 subfamily. Monomer.

It localises to the cytoplasm. The catalysed reaction is tRNA(Glu) + L-glutamate + ATP = L-glutamyl-tRNA(Glu) + AMP + diphosphate. In terms of biological role, catalyzes the attachment of glutamate to tRNA(Glu) in a two-step reaction: glutamate is first activated by ATP to form Glu-AMP and then transferred to the acceptor end of tRNA(Glu). The chain is Glutamate--tRNA ligase from Ligilactobacillus salivarius (strain UCC118) (Lactobacillus salivarius).